Reading from the N-terminus, the 599-residue chain is MDKKFIRNFSIIAHIDHGKSTLSDRIIEFTNTLSKREMTNQILDSMDIERERGITIKLNAVQIKYHARDNNEYLIHLIDTPGHVDFTYEVSRSLAACEGAILVVDAAQGIEAQTLSNVYLALENNLEIVPTINKIDLPSADPERVKKEIEDVIGLDTSDIPLISAKTGLNIQDVLEAIIKHVPPPLDANDDAKLQALIFDSFYDSYKGVVCLVRIKQGTIKVGDKIRMMANNKDYIVSELGIRTPKIVNKTELVAGEVGWVAAAIKTVKDINVGDTITHANNPADKPLPGYKKILPMVYCGLYPIDTSQYDDLKEAMAKISLSDAALTYEYETSQALGFGIRCGFLGLLHMDVIRERIAREFNIELILTAPSVIYKIELTNNQEISIDSPAKMPEPTNIKAIKEPFVKLAIITPDNYVGAIMELCQSRRGSYQDLEVIDGTRRRLIYKMPLAEIMYSFFDSLKSITKGYATMDYELIGYQAEKLVKIDIMLNGNKVDALSIIAHRDFAYGKSKIICERLKEVIPKHQFEIPIQASIGSKIIARETIKAVRKDVIAKCYGGDVSRKKKLLEQQKEGKKRLKAIGNVDVPQDAFVKVLSEN.

The region spanning 4 to 186 (KFIRNFSIIA…AIIKHVPPPL (183 aa)) is the tr-type G domain. Residues 16–21 (DHGKST) and 133–136 (NKID) contribute to the GTP site.

This sequence belongs to the TRAFAC class translation factor GTPase superfamily. Classic translation factor GTPase family. LepA subfamily.

The protein resides in the cell membrane. The enzyme catalyses GTP + H2O = GDP + phosphate + H(+). In terms of biological role, required for accurate and efficient protein synthesis under certain stress conditions. May act as a fidelity factor of the translation reaction, by catalyzing a one-codon backward translocation of tRNAs on improperly translocated ribosomes. Back-translocation proceeds from a post-translocation (POST) complex to a pre-translocation (PRE) complex, thus giving elongation factor G a second chance to translocate the tRNAs correctly. Binds to ribosomes in a GTP-dependent manner. The sequence is that of Elongation factor 4 from Ureaplasma urealyticum serovar 10 (strain ATCC 33699 / Western).